We begin with the raw amino-acid sequence, 305 residues long: Ornithine carbamoyltransferase (305 aa).

Residues 54–57 (STRT), Q81, R105, and 132–135 (HPCQ) each bind carbamoyl phosphate. L-ornithine-binding positions include N163, D223, and 227–228 (SM). Residues 262–263 (CL) and R290 contribute to the carbamoyl phosphate site.

Belongs to the aspartate/ornithine carbamoyltransferase superfamily. OTCase family.

It localises to the cytoplasm. The catalysed reaction is carbamoyl phosphate + L-ornithine = L-citrulline + phosphate + H(+). The protein operates within amino-acid biosynthesis; L-arginine biosynthesis; L-arginine from L-ornithine and carbamoyl phosphate: step 1/3. Reversibly catalyzes the transfer of the carbamoyl group from carbamoyl phosphate (CP) to the N(epsilon) atom of ornithine (ORN) to produce L-citrulline. The sequence is that of Ornithine carbamoyltransferase from Agrobacterium fabrum (strain C58 / ATCC 33970) (Agrobacterium tumefaciens (strain C58)).